We begin with the raw amino-acid sequence, 218 residues long: Cytochrome c biogenesis ATP-binding export protein CcmA (218 aa).

The ABC transporter domain occupies 2 to 217 (LEAKNLTCIR…KSCLSACCAV (216 aa)). Residue 34–41 (GPNGAGKT) coordinates ATP.

This sequence belongs to the ABC transporter superfamily. CcmA exporter (TC 3.A.1.107) family. In terms of assembly, the complex is composed of two ATP-binding proteins (CcmA) and two transmembrane proteins (CcmB).

The protein resides in the cell inner membrane. It catalyses the reaction heme b(in) + ATP + H2O = heme b(out) + ADP + phosphate + H(+). Functionally, part of the ABC transporter complex CcmAB involved in the biogenesis of c-type cytochromes; once thought to export heme, this seems not to be the case, but its exact role is uncertain. Responsible for energy coupling to the transport system. The sequence is that of Cytochrome c biogenesis ATP-binding export protein CcmA from Yersinia pestis.